The primary structure comprises 276 residues: uncharacterized protein (276 aa).

The AB hydrolase-1 domain maps to 20–137; sequence PVLIFIPGAN…PPINTFLPDS (118 aa). The segment at 57–76 is disordered; the sequence is GESELTEPLPDSASNPDSDY.

It belongs to the AB hydrolase superfamily.

This is an uncharacterized protein from Staphylococcus aureus (strain N315).